The following is a 178-amino-acid chain: ATP-dependent protease subunit HslV (178 aa).

Thr7 is an active-site residue. 3 residues coordinate Na(+): Gly162, Cys165, and Thr168.

It belongs to the peptidase T1B family. HslV subfamily. In terms of assembly, a double ring-shaped homohexamer of HslV is capped on each side by a ring-shaped HslU homohexamer. The assembly of the HslU/HslV complex is dependent on binding of ATP.

Its subcellular location is the cytoplasm. The enzyme catalyses ATP-dependent cleavage of peptide bonds with broad specificity.. Its activity is regulated as follows. Allosterically activated by HslU binding. Protease subunit of a proteasome-like degradation complex believed to be a general protein degrading machinery. This chain is ATP-dependent protease subunit HslV, found in Burkholderia ambifaria (strain MC40-6).